A 253-amino-acid chain; its full sequence is Cholesterol ring-cleaving hydrolase IpdB subunit (253 aa).

It belongs to the 3-oxoacid CoA-transferase subunit B family. As to quaternary structure, heterotetramer composed of 2 IpdA subunits and 2 IpdB subunits.

The enzyme catalyses (3E)-2-(2-carboxylatoethyl)-3-methyl-6-oxocyclohex-1-ene-1-carboxyl-CoA + H2O = 6-methyl-3,7-dioxodecanedioyl-CoA. Its pathway is steroid metabolism; cholesterol degradation. Its function is as follows. Involved in the final steps of cholesterol and steroid degradation. Opens the last steroid ring of cholesterol by catalyzing the hydrolysis of (3E)-2-(2-carboxylatoethyl)-3-methyl-6-oxocyclohex-1-ene-1-carboxyl-CoA (COCHEA-CoA) to 6-methyl-3,7-dioxodecanedioyl-CoA (MeDODA-CoA). In Rhodococcus jostii (strain RHA1), this protein is Cholesterol ring-cleaving hydrolase IpdB subunit.